Consider the following 939-residue polypeptide: Dynamin-like GTPase MGM1, mitochondrial (939 aa).

The N-terminal 27 residues, 1-27 (MSAQLRAAAAITPAARRVISGPAAVRR), are a transit peptide targeting the mitochondrion. The chain crosses the membrane as a helical span at residues 85–103 (FIRVPALFGGMMLGAVGWV). Residues 170–183 (AGEGSGSGEGGPNG) show a composition bias toward gly residues. Positions 170 to 196 (AGEGSGSGEGGPNGGPEPPRQSRAGAA) are disordered. The 274-residue stretch at 249-522 (TVTLPSIVVI…LEQQMSSKLN (274 aa)) folds into the Dynamin-type G domain. Positions 259–266 (GSQSSGKS) are G1 motif. Residues S262, G264, K265, S266, S267, and G281 each contribute to the GTP site. S266 contributes to the Mg(2+) binding site. The tract at residues 285–287 (ITR) is G2 motif. Positions 286 and 359 each coordinate Mg(2+). The interval 359–362 (DLPG) is G3 motif. A G4 motif region spans residues 427–430 (TKMD). Residues K428, D430, and S457 each coordinate GTP. A G5 motif region spans residues 456-459 (ISKL). The stalk region stretch occupies residues 549 to 703 (SAESYLAASL…TSDGIEISLK (155 aa)). Residues 710–809 (DIQPNEWAQG…LSLRIQAAKS (100 aa)) form a paddle region region. Residues 810 to 877 (RQCKTLTNKY…GGGLEKFARE (68 aa)) form a stalk region region. Residues C812 and C821 are joined by a disulfide bond. A GED domain is found at 815–909 (LTNKYYCPEV…KIEELHRISS (95 aa)).

It belongs to the TRAFAC class dynamin-like GTPase superfamily. Dynamin/Fzo/YdjA family. Oligomeric complex consisting of membrane-bound and soluble forms of MGM1. Cleavage of the transit peptide by mitochondrial processing protease (MPP) produces a long integral membrane form of MGM1 (L-MGM1). Further processing by the rhomboid protease PCP1 produces a short peripheral membrane form of MGM1 (S-MGM1). Both forms are required for full activity.

The protein localises to the mitochondrion inner membrane. It is found in the mitochondrion intermembrane space. It catalyses the reaction GTP + H2O = GDP + phosphate + H(+). Dynamin-related GTPase that is essential for normal mitochondrial morphology by mediating fusion of the mitochondrial inner membranes, regulating cristae morphology and maintaining respiratory chain function. Exists in two forms: the transmembrane, long form (Dynamin-like GTPase MGM1, long form; L-MGM1), which is tethered to the inner mitochondrial membrane, and the short soluble form (Dynamin-like GTPase MGM1, short form; S-MGM1), which results from proteolytic cleavage and localizes in the intermembrane space. Both forms (L-MGM1 and S-MGM1) cooperate to catalyze the fusion of the mitochondrial inner membrane. The equilibrium between L-MGM1 and S-MGM1 is essential: excess levels of S-MGM1, following loss of mitochondrial membrane potential, lead to an impaired equilibrium between L-MGM1 and S-MGM1, inhibiting mitochondrial fusion. Plays a role in the maintenance and remodeling of mitochondrial cristae, some invaginations of the mitochondrial inner membrane that provide an increase in the surface area. Probably acts by forming helical filaments at the inside of inner membrane tubes with the shape and dimensions of crista junctions. Functionally, constitutes the transmembrane long form (L-MGM1) that plays a central role in mitochondrial inner membrane fusion and cristae morphology. L-MGM1 and the soluble short form (S-MGM1) form higher-order helical assemblies that coordinate the fusion of mitochondrial inner membranes. Inner membrane-anchored L-MGM1 molecules initiate membrane remodeling by recruiting soluble S-MGM1 to rapidly polymerize into a flexible cylindrical scaffold encaging the mitochondrial inner membrane. Once at the membrane surface, the formation of S-MGM1 helices induce bilayer curvature. MGM1 dimerization through the paddle region, which inserts into cardiolipin-containing membrane, promotes GTP hydrolysis and the helical assembly of a flexible MGM1 lattice on the membrane, which drives membrane curvature and mitochondrial fusion. Its function is as follows. Constitutes the soluble short form (S-MGM1) generated by cleavage by PCP1, which plays a central role in mitochondrial inner membrane fusion and cristae morphology. The transmembrane long form (L-MGM1) and the S-MGM1 form higher-order helical assemblies that coordinate the fusion of mitochondrial inner membranes. Inner membrane-anchored L-MGM1 molecules initiate membrane remodeling by recruiting soluble S-MGM1 to rapidly polymerize into a flexible cylindrical scaffold encaging the mitochondrial inner membrane. Once at the membrane surface, the formation of S-MGM1 helices induce bilayer curvature. MGM1 dimerization through the paddle region, which inserts into cardiolipin-containing membrane, promotes GTP hydrolysis and the helical assembly of a flexible MGM1 lattice on the membrane, which drives membrane curvature and mitochondrial fusion. Excess levels of S-MGM1 produced by cleavage by PCP1 following stress conditions that induce loss of mitochondrial membrane potential, lead to an impaired equilibrium between L-MGM1 and S-MGM1, thereby inhibiting mitochondrial fusion. In Chaetomium thermophilum (strain DSM 1495 / CBS 144.50 / IMI 039719) (Thermochaetoides thermophila), this protein is Dynamin-like GTPase MGM1, mitochondrial.